Here is a 508-residue protein sequence, read N- to C-terminus: Aldehyde dehydrogenase family 7 member B4 (508 aa).

NAD(+) is bound at residue 244–249; the sequence is GSSRVG. The active-site Proton acceptor is the Glu266. Cys300 acts as the Nucleophile in catalysis.

This sequence belongs to the aldehyde dehydrogenase family. In terms of assembly, homotetramer.

It catalyses the reaction an aldehyde + NAD(+) + H2O = a carboxylate + NADH + 2 H(+). This is Aldehyde dehydrogenase family 7 member B4 (ALDH7B4) from Arabidopsis thaliana (Mouse-ear cress).